The following is a 493-amino-acid chain: Glutamyl-tRNA(Gln) amidotransferase subunit A (493 aa).

Catalysis depends on charge relay system residues lysine 78 and serine 158. Residue serine 182 is the Acyl-ester intermediate of the active site.

Belongs to the amidase family. GatA subfamily. As to quaternary structure, heterotrimer of A, B and C subunits.

It catalyses the reaction L-glutamyl-tRNA(Gln) + L-glutamine + ATP + H2O = L-glutaminyl-tRNA(Gln) + L-glutamate + ADP + phosphate + H(+). Allows the formation of correctly charged Gln-tRNA(Gln) through the transamidation of misacylated Glu-tRNA(Gln) in organisms which lack glutaminyl-tRNA synthetase. The reaction takes place in the presence of glutamine and ATP through an activated gamma-phospho-Glu-tRNA(Gln). The chain is Glutamyl-tRNA(Gln) amidotransferase subunit A from Beijerinckia indica subsp. indica (strain ATCC 9039 / DSM 1715 / NCIMB 8712).